The primary structure comprises 348 residues: S-adenosyl-L-methionine-dependent methyl transferase PigF (348 aa).

Glutamate 199 is a binding site for S-adenosyl-L-methionine. Residue histidine 247 is the Proton acceptor of the active site.

The protein belongs to the class I-like SAM-binding methyltransferase superfamily. Cation-independent O-methyltransferase family.

It functions in the pathway antibiotic biosynthesis; prodigiosin biosynthesis. Involved in the biosynthesis of 4-methoxy-2,2'-bipyrrole-5-carbaldehyde (MBC), one of the terminal products involved in the biosynthesis of the red antibiotic prodigiosin (Pig). Catalyzes the transfer of a methyl group from S-adenosyl-L-methionine (SAM) to the hydroxyl group of 4-hydroxy-2,2'-bipyrrole-5-carbaldehyde (HBC) to yield 4-methoxy-2,2'-bipyrrole-5-carbaldehyde (MBC). The polypeptide is S-adenosyl-L-methionine-dependent methyl transferase PigF (Serratia sp. (strain ATCC 39006) (Prodigiosinella confusarubida)).